The primary structure comprises 316 residues: Phosphoribosylaminoimidazole-succinocarboxamide synthase (316 aa).

Belongs to the SAICAR synthetase family.

The enzyme catalyses 5-amino-1-(5-phospho-D-ribosyl)imidazole-4-carboxylate + L-aspartate + ATP = (2S)-2-[5-amino-1-(5-phospho-beta-D-ribosyl)imidazole-4-carboxamido]succinate + ADP + phosphate + 2 H(+). The protein operates within purine metabolism; IMP biosynthesis via de novo pathway; 5-amino-1-(5-phospho-D-ribosyl)imidazole-4-carboxamide from 5-amino-1-(5-phospho-D-ribosyl)imidazole-4-carboxylate: step 1/2. In Flavobacterium psychrophilum (strain ATCC 49511 / DSM 21280 / CIP 103535 / JIP02/86), this protein is Phosphoribosylaminoimidazole-succinocarboxamide synthase.